The sequence spans 115 residues: Phosphoribosyl-ATP pyrophosphatase (115 aa).

The protein belongs to the PRA-PH family.

It localises to the cytoplasm. It catalyses the reaction 1-(5-phospho-beta-D-ribosyl)-ATP + H2O = 1-(5-phospho-beta-D-ribosyl)-5'-AMP + diphosphate + H(+). It functions in the pathway amino-acid biosynthesis; L-histidine biosynthesis; L-histidine from 5-phospho-alpha-D-ribose 1-diphosphate: step 2/9. This Bordetella parapertussis (strain 12822 / ATCC BAA-587 / NCTC 13253) protein is Phosphoribosyl-ATP pyrophosphatase.